A 699-amino-acid polypeptide reads, in one-letter code: Nucleolar and coiled-body phosphoprotein 1 (699 aa).

Residues 10-42 (VPSDLYPLVLGFLRDNQLSEVANKFAKATGATQ) enclose the LisH domain. Residue K33 is modified to N6-acetyllysine. A disordered region spans residues 65–637 (ERKLQANGPV…VREEEIEVDS (573 aa)). Glycyl lysine isopeptide (Lys-Gly) (interchain with G-Cter in SUMO2) cross-links involve residues K67 and K76. Residues 84-95 (SSDSEDSSEEEE) form an Acidic serine cluster 1 repeat. Residues 84–566 (SSDSEDSSEE…GKAAKNSEEE (483 aa)) form an 11 X 12 AA approximate repeats of an acidic serine cluster region. Positions 86–97 (DSEDSSEEEEEV) are enriched in acidic residues. Phosphoserine is present on residues S87, S90, and S91. S91 is modified (diphosphoserine). Low complexity predominate over residues 100-110 (PPAKKAAVPAK). An Acidic serine cluster 2 repeat occupies 125 to 136 (ESSSSEESSDDD). Residues 144–159 (QPVQKGVKPQAKAAKA) show a composition bias toward low complexity. One copy of the Acidic serine cluster 3 repeat lies at 167–178 (SDSDSDSSSEDE). Residue K186 forms a Glycyl lysine isopeptide (Lys-Gly) (interchain with G-Cter in SUMO2) linkage. At T188 the chain carries Phosphothreonine. K193 is covalently cross-linked (Glycyl lysine isopeptide (Lys-Gly) (interchain with G-Cter in SUMO2)). 2 stretches are compositionally biased toward low complexity: residues 193–227 (KAQTKAPPKPARAAPKIANGKAASSSSSSSSSSSS) and 236–261 (AATPKKTVPKKQVVAKAPVKAATTPT). Residues 204-382 (RAAPKIANGK…DDEAPSKPAG (179 aa)) form an interaction with RPA194 region. Residues 221–232 (SSSSSSSDDSEE) form an Acidic serine cluster 4 repeat. One copy of the Acidic serine cluster 5 repeat lies at 264–275 (SSSSEDSSSDEE). The segment covering 291 to 301 (SVPPPSAPPPK) has biased composition (pro residues). The segment covering 321-333 (SSEDSSDESDSSS) has biased composition (acidic residues). Residues 325–336 (SSDESDSSSEEE) form an Acidic serine cluster 6 repeat. Glycyl lysine isopeptide (Lys-Gly) (interchain with G-Cter in SUMO2) cross-links involve residues K342 and K347. Residues S362, S363, and S366 each carry the phosphoserine modification. Residues 363–375 (SDSSDSDSSEDDE) form an Acidic serine cluster 7 repeat. Residues 366-375 (SDSDSSEDDE) are compositionally biased toward acidic residues. Positions 381–397 (AGTTKNSSNKPAVTTKS) are enriched in polar residues. Glycyl lysine isopeptide (Lys-Gly) (interchain with G-Cter in SUMO2) cross-links involve residues K390 and K396. Position 397 is a phosphoserine (S397). Low complexity predominate over residues 398–409 (PAVKPAAAPKQP). Glycyl lysine isopeptide (Lys-Gly) (interchain with G-Cter in SUMO2) cross-links involve residues K401 and K407. K415 carries the N6-acetyllysine; alternate modification. K415 is covalently cross-linked (Glycyl lysine isopeptide (Lys-Gly) (interchain with G-Cter in SUMO1); alternate). K415 is covalently cross-linked (Glycyl lysine isopeptide (Lys-Gly) (interchain with G-Cter in SUMO2); alternate). The stretch at 425-436 (SSEEESSSSEEE) is one Acidic serine cluster 8 repeat. Residues K440 and K452 each participate in a glycyl lysine isopeptide (Lys-Gly) (interchain with G-Cter in SUMO2) cross-link. Composition is skewed to low complexity over residues 441–476 (MVATTKPKATAKAALSLPAKQAPQGSRDSSSDSDSS) and 498–523 (AGGAAPSKPASAKKGKAESSNSSSSD). A Phosphoserine modification is found at S456. The Acidic serine cluster 9 repeat unit spans residues 470–481 (SSDSDSSSSEEE). Residue K505 forms a Glycyl lysine isopeptide (Lys-Gly) (interchain with G-Cter in SUMO2) linkage. S508 is modified (phosphoserine). Residues 519-529 (SSSSDDSSEEE) form an Acidic serine cluster 10 repeat. S538 carries the phosphoserine modification. Polar residues predominate over residues 547–556 (NGTSALTAQN). One copy of the Acidic serine cluster 11 repeat lies at 555–566 (QNGKAAKNSEEE). A Phosphoserine modification is found at S563. Residue K572 forms a Glycyl lysine isopeptide (Lys-Gly) (interchain with G-Cter in SUMO1) linkage. K579 participates in a covalent cross-link: Glycyl lysine isopeptide (Lys-Gly) (interchain with G-Cter in SUMO2). S580 and S582 each carry phosphoserine. A Glycyl lysine isopeptide (Lys-Gly) (interchain with G-Cter in SUMO2) cross-link involves residue K604. 2 positions are modified to phosphothreonine: T607 and T610. Residue K613 forms a Glycyl lysine isopeptide (Lys-Gly) (interchain with G-Cter in SUMO2) linkage. S622 carries the phosphoserine modification. A compositionally biased stretch (basic and acidic residues) spans 627-637 (RVREEEIEVDS). S643 bears the Phosphoserine mark. A Glycyl lysine isopeptide (Lys-Gly) (interchain with G-Cter in SUMO2) cross-link involves residue K647. K663 carries the N6-acetyllysine; alternate modification. K663 is covalently cross-linked (Glycyl lysine isopeptide (Lys-Gly) (interchain with G-Cter in SUMO2); alternate). R683 is subject to Omega-N-methylarginine. S686 carries the post-translational modification Phosphoserine. Residue K695 forms a Glycyl lysine isopeptide (Lys-Gly) (interchain with G-Cter in SUMO2) linkage. Phosphoserine is present on S698.

It belongs to the NOLC1 family. Heterodimer; heterodimerizes with TCOF1 following monoubiquitination. Interacts with RNA polymerase I 194 kDa subunit (RPA194) and with casein kinase-II. Interacts with DKC1/NAP57, NOP58 and fibrillarin. In terms of processing, undergoes rapid and massive phosphorylation/dephosphorylation cycles on CK2 and PKC sites. NOLC1 is one of the mostly phosphorylated proteins in the cell. Post-translationally, ubiquitinated. Monoubiquitination by the BCR(KBTBD8) complex promotes the formation of a NOLC1-TCOF1 complex that acts as a platform to connect RNA polymerase I with enzymes responsible for ribosomal processing and modification, leading to remodel the translational program of differentiating cells in favor of neural crest specification. Pyrophosphorylated by 5-diphosphoinositol pentakisphosphate (5-IP7). Serine pyrophosphorylation is achieved by Mg(2+)-dependent, but enzyme independent transfer of a beta-phosphate from a inositol pyrophosphate to a pre-phosphorylated serine residue.

It is found in the nucleus. The protein resides in the nucleolus. It localises to the cytoplasm. Functionally, nucleolar protein that acts as a regulator of RNA polymerase I by connecting RNA polymerase I with enzymes responsible for ribosomal processing and modification. Required for neural crest specification: following monoubiquitination by the BCR(KBTBD8) complex, associates with TCOF1 and acts as a platform to connect RNA polymerase I with enzymes responsible for ribosomal processing and modification, leading to remodel the translational program of differentiating cells in favor of neural crest specification. Involved in nucleologenesis, possibly by playing a role in the maintenance of the fundamental structure of the fibrillar center and dense fibrillar component in the nucleolus. It has intrinsic GTPase and ATPase activities. This Homo sapiens (Human) protein is Nucleolar and coiled-body phosphoprotein 1.